A 304-amino-acid chain; its full sequence is tRNA dimethylallyltransferase (304 aa).

13–20 lines the ATP pocket; the sequence is GPTAAGKT. A substrate-binding site is contributed by 15 to 20; that stretch reads TAAGKT. The segment at 38-41 is interaction with substrate tRNA; it reads DSRQ.

The protein belongs to the IPP transferase family. In terms of assembly, monomer. Mg(2+) is required as a cofactor.

It carries out the reaction adenosine(37) in tRNA + dimethylallyl diphosphate = N(6)-dimethylallyladenosine(37) in tRNA + diphosphate. In terms of biological role, catalyzes the transfer of a dimethylallyl group onto the adenine at position 37 in tRNAs that read codons beginning with uridine, leading to the formation of N6-(dimethylallyl)adenosine (i(6)A). This is tRNA dimethylallyltransferase from Cytophaga hutchinsonii (strain ATCC 33406 / DSM 1761 / CIP 103989 / NBRC 15051 / NCIMB 9469 / D465).